A 166-amino-acid polypeptide reads, in one-letter code: Cyclic pyranopterin monophosphate synthase (166 aa).

Residues 83–85 and 121–122 each bind substrate; these read LCH and ME. The active site involves D136.

Belongs to the MoaC family. In terms of assembly, homohexamer; trimer of dimers.

It carries out the reaction (8S)-3',8-cyclo-7,8-dihydroguanosine 5'-triphosphate = cyclic pyranopterin phosphate + diphosphate. The protein operates within cofactor biosynthesis; molybdopterin biosynthesis. Its function is as follows. Catalyzes the conversion of (8S)-3',8-cyclo-7,8-dihydroguanosine 5'-triphosphate to cyclic pyranopterin monophosphate (cPMP). This Trichodesmium erythraeum (strain IMS101) protein is Cyclic pyranopterin monophosphate synthase.